The sequence spans 137 residues: MLQPKRTKFRKAHKGRIKGAAKGGFTLNFGSYGLKALQPERVTARQIEATRRAITRHMKRAGRVWIRIFPDVPVSKKPTEVRMGKGKGSPEFWACKVKPGRIMFEIDGVPENVAREALELGAAKLPVKTKIVARLGE.

It belongs to the universal ribosomal protein uL16 family. Part of the 50S ribosomal subunit.

Binds 23S rRNA and is also seen to make contacts with the A and possibly P site tRNAs. This is Large ribosomal subunit protein uL16 from Maricaulis maris (strain MCS10) (Caulobacter maris).